The primary structure comprises 159 residues: Transcription elongation factor A protein-like 1 (159 aa).

The tract at residues 1-120 is disordered; it reads MEKACKEPEE…PQFRGDIHGR (120 aa). Positions 17 to 34 are enriched in basic and acidic residues; the sequence is KADEERPSVEPSPEKSSP. Acidic residues predominate over residues 37–54; it reads QSSEEVSSEEEFFPDELL. Basic and acidic residues-rich tracts occupy residues 64-80 and 95-119; these read SEER…DLFE and HKLE…DIHG.

It belongs to the TFS-II family. TFA subfamily.

It localises to the nucleus. In terms of biological role, may be involved in transcriptional regulation. Modulates various viral and cellular promoters in a promoter context-dependent manner. Does not bind DNA directly. This chain is Transcription elongation factor A protein-like 1, found in Bos taurus (Bovine).